Here is a 408-residue protein sequence, read N- to C-terminus: Imidazolonepropionase (408 aa).

Residues histidine 73 and histidine 75 each contribute to the Fe(3+) site. 2 residues coordinate Zn(2+): histidine 73 and histidine 75. Residues arginine 82, tyrosine 145, and histidine 178 each contribute to the 4-imidazolone-5-propanoate site. Residue tyrosine 145 coordinates N-formimidoyl-L-glutamate. Histidine 243 contributes to the Fe(3+) binding site. Histidine 243 contributes to the Zn(2+) binding site. Residue glutamine 246 coordinates 4-imidazolone-5-propanoate. Aspartate 318 contributes to the Fe(3+) binding site. Position 318 (aspartate 318) interacts with Zn(2+). The N-formimidoyl-L-glutamate site is built by asparagine 320 and glycine 322. Residue serine 323 participates in 4-imidazolone-5-propanoate binding.

This sequence belongs to the metallo-dependent hydrolases superfamily. HutI family. Zn(2+) is required as a cofactor. Requires Fe(3+) as cofactor.

The protein localises to the cytoplasm. It carries out the reaction 4-imidazolone-5-propanoate + H2O = N-formimidoyl-L-glutamate. It participates in amino-acid degradation; L-histidine degradation into L-glutamate; N-formimidoyl-L-glutamate from L-histidine: step 3/3. In terms of biological role, catalyzes the hydrolytic cleavage of the carbon-nitrogen bond in imidazolone-5-propanoate to yield N-formimidoyl-L-glutamate. It is the third step in the universal histidine degradation pathway. This is Imidazolonepropionase from Shewanella halifaxensis (strain HAW-EB4).